The following is a 108-amino-acid chain: Large ribosomal subunit protein uL24 (108 aa).

It belongs to the universal ribosomal protein uL24 family. In terms of assembly, part of the 50S ribosomal subunit.

In terms of biological role, one of two assembly initiator proteins, it binds directly to the 5'-end of the 23S rRNA, where it nucleates assembly of the 50S subunit. Functionally, one of the proteins that surrounds the polypeptide exit tunnel on the outside of the subunit. This chain is Large ribosomal subunit protein uL24, found in Mycoplasma genitalium (strain ATCC 33530 / DSM 19775 / NCTC 10195 / G37) (Mycoplasmoides genitalium).